A 122-amino-acid polypeptide reads, in one-letter code: MSAPDSITVTVADHNGVAVLSIGGEIDLITAAALEEAIGEVVADNPTALVIDLSAVEFLGSVGLKILAATSEKIGQSVKFGVVARGSVTRRPIHLMGLDKTFRLFSTLHDALTGVRGGRIDR.

Residues 7 to 115 (ITVTVADHNG…STLHDALTGV (109 aa)) enclose the STAS domain. A Phosphoserine modification is found at Ser-61.

This sequence belongs to the anti-sigma-factor antagonist family. Interacts with anti-sigma-F factor RsbW (UsfX). Its phosphorylation may prevent this interaction. In terms of processing, putative phosphorylation on Ser-61 may prevent interaction with RsbW.

In terms of biological role, positive regulator of sigma-F (SigF) activity. Binds to anti-sigma-F factor RsbW (UsfX) preventing its binding to SigF, thus activating transcription. This is Anti-sigma-F factor antagonist RsfB (rsfB) from Mycobacterium tuberculosis (strain CDC 1551 / Oshkosh).